The primary structure comprises 452 residues: C4-dicarboxylate transport protein 1 (452 aa).

The next 9 helical transmembrane spans lie at 18-38 (FQVV…PSVG), 51-71 (LIKM…IAGM), 83-103 (LALL…LLLV), 151-171 (AFAK…GFAL), 191-211 (VLFT…FGAM), 229-249 (LMGA…GAIA), 304-324 (GYSF…VFIA), 337-357 (ITLL…TGSG), and 359-379 (IVLA…LALI). The disordered stretch occupies residues 426–452 (WEEAQEPERVLDKKTEHMPVSAMSDAG). Over residues 431 to 442 (EPERVLDKKTEH) the composition is skewed to basic and acidic residues.

It belongs to the dicarboxylate/amino acid:cation symporter (DAACS) (TC 2.A.23) family.

It is found in the cell inner membrane. Responsible for the transport of dicarboxylates such as succinate, fumarate, and malate from the periplasm across the membrane. This Polaromonas naphthalenivorans (strain CJ2) protein is C4-dicarboxylate transport protein 1.